The primary structure comprises 264 residues: 3-methyl-2-oxobutanoate hydroxymethyltransferase (264 aa).

2 residues coordinate Mg(2+): Asp-45 and Asp-84. 3-methyl-2-oxobutanoate-binding positions include 45 to 46 (DS), Asp-84, and Lys-112. Residue Glu-114 participates in Mg(2+) binding. The Proton acceptor role is filled by Glu-181.

Belongs to the PanB family. Homodecamer; pentamer of dimers. Mg(2+) serves as cofactor.

It localises to the cytoplasm. The catalysed reaction is 3-methyl-2-oxobutanoate + (6R)-5,10-methylene-5,6,7,8-tetrahydrofolate + H2O = 2-dehydropantoate + (6S)-5,6,7,8-tetrahydrofolate. Its pathway is cofactor biosynthesis; (R)-pantothenate biosynthesis; (R)-pantoate from 3-methyl-2-oxobutanoate: step 1/2. In terms of biological role, catalyzes the reversible reaction in which hydroxymethyl group from 5,10-methylenetetrahydrofolate is transferred onto alpha-ketoisovalerate to form ketopantoate. In Shewanella pealeana (strain ATCC 700345 / ANG-SQ1), this protein is 3-methyl-2-oxobutanoate hydroxymethyltransferase.